The following is a 549-amino-acid chain: Probable protein kinase UbiB (549 aa).

A Protein kinase domain is found at 123–504 (DFDETALASA…QRNNTGFSRL (382 aa)). Residues 129-137 (LASASIAQV) and Lys156 each bind ATP. Asp291 serves as the catalytic Proton acceptor. Residues 505–525 (MILGIAIAGTFWKFEMLPLWV) traverse the membrane as a helical segment.

This sequence belongs to the ABC1 family. UbiB subfamily.

The protein localises to the cell inner membrane. It functions in the pathway cofactor biosynthesis; ubiquinone biosynthesis [regulation]. Its function is as follows. Is probably a protein kinase regulator of UbiI activity which is involved in aerobic coenzyme Q (ubiquinone) biosynthesis. This is Probable protein kinase UbiB from Glaesserella parasuis serovar 5 (strain SH0165) (Haemophilus parasuis).